The sequence spans 370 residues: S-adenosylmethionine decarboxylase proenzyme (370 aa).

A substrate-binding site is contributed by Phe28. Catalysis depends on residues Glu29 and Glu32. Glu85 is a binding site for substrate. The Schiff-base intermediate with substrate; via pyruvic acid role is filled by Ser86. Pyruvic acid (Ser); by autocatalysis is present on Ser86. Catalysis depends on Cys100, which acts as the Proton donor; for catalytic activity. Active-site proton acceptor; for processing activity residues include Ser250 and His263. A substrate-binding site is contributed by Glu267.

It belongs to the eukaryotic AdoMetDC family. Forms a heterodimer with catalytically inactive AdoMetDC prozyme; heterodimerization is required to activate AdoMetDC. The cofactor is pyruvate. Post-translationally, is synthesized initially as an inactive proenzyme. Formation of the active enzyme involves a self-maturation process in which the active site pyruvoyl group is generated from an internal serine residue via an autocatalytic post-translational modification. Two non-identical subunits are generated from the proenzyme in this reaction, and the pyruvate is formed at the N-terminus of the alpha chain, which is derived from the carboxyl end of the proenzyme. The post-translation cleavage follows an unusual pathway, termed non-hydrolytic serinolysis, in which the side chain hydroxyl group of the serine supplies its oxygen atom to form the C-terminus of the beta chain, while the remainder of the serine residue undergoes an oxidative deamination to the alpha chain.

The enzyme catalyses S-adenosyl-L-methionine + H(+) = S-adenosyl 3-(methylsulfanyl)propylamine + CO2. The protein operates within amine and polyamine biosynthesis; S-adenosylmethioninamine biosynthesis; S-adenosylmethioninamine from S-adenosyl-L-methionine: step 1/1. Its activity is regulated as follows. Allosterically activated by AdoMetDC prozyme. Activated by putrescine. Inhibited by spermine and methylglyoxal-bis(guanylhydrazone) (MGBG) and slightly by spermidine. Inhibited by 5'-([(Z)-4-amino-2-butenyl]methylamino)-5'-deoxyadenosine (MDL 73811). Probably in association with catalytically inactive AdoMetDC prozyme, catalyzes the decarboxylation of S-adenosyl-L-methionine which is essential for the biosynthesis of the polyamine spermidine. Required for growth and survival during the bloodstream life cycle stage. The protein is S-adenosylmethionine decarboxylase proenzyme of Trypanosoma cruzi.